The following is a 302-amino-acid chain: Ribosomal RNA small subunit methyltransferase H (302 aa).

S-adenosyl-L-methionine contacts are provided by residues 34-36, D53, F80, D101, and Q108; that span reads AGH. The disordered stretch occupies residues 283 to 302; that stretch reads LEENPRSKSAKMRVLKKIER. Residues 290 to 302 show a composition bias toward basic residues; sequence KSAKMRVLKKIER.

It belongs to the methyltransferase superfamily. RsmH family.

It localises to the cytoplasm. It carries out the reaction cytidine(1402) in 16S rRNA + S-adenosyl-L-methionine = N(4)-methylcytidine(1402) in 16S rRNA + S-adenosyl-L-homocysteine + H(+). Specifically methylates the N4 position of cytidine in position 1402 (C1402) of 16S rRNA. This is Ribosomal RNA small subunit methyltransferase H from Mycoplasma mobile (strain ATCC 43663 / 163K / NCTC 11711) (Mesomycoplasma mobile).